The primary structure comprises 245 residues: Peroxisome biogenesis protein 19-2 (245 aa).

The segment at 17-106 (ALDDFKDLNL…LSSKQQPTGS (90 aa)) is disordered. 2 stretches are compositionally biased toward basic and acidic residues: residues 33–44 (VKKEEGDKKETE) and 71–92 (AKED…ETVK). Over residues 96-105 (SLSSKQQPTG) the composition is skewed to polar residues. Cys242 carries the cysteine methyl ester modification. Cys242 carries S-farnesyl cysteine lipidation. A propeptide spans 243–245 (CVM) (removed in mature form).

Belongs to the peroxin-19 family. In terms of assembly, dimer. Interacts with PEX10 (via C-terminus). In terms of processing, may be farnesylated. As to expression, expressed in roots, leaves, flowers, siliques and stems. Highest expression in roots and leaves.

The protein localises to the cytoplasm. It localises to the peroxisome membrane. In terms of biological role, contributes to morphology determination of peroxisomes, but not to import of peroxisomal matrix proteins. Required for proper post-translational import and stabilization of peroxisomal membrane proteins (PMPs). Acts as a cytosolic import receptor for PMPs and delivers them to the docking factor PEX3 at the peroxisomal membrane for subsequent insertion into the membrane. Acts as a chaperone in stabilizing or maintaining PMPs in the lipid bilayer. The sequence is that of Peroxisome biogenesis protein 19-2 (PEX19-2) from Arabidopsis thaliana (Mouse-ear cress).